A 241-amino-acid chain; its full sequence is Probable FKBP-type peptidyl-prolyl cis-trans isomerase (241 aa).

The 92-residue stretch at 150–241 (TDTVKVHYTG…VLDVNPKSEK (92 aa)) folds into the PPIase FKBP-type domain.

The protein belongs to the FKBP-type PPIase family.

It carries out the reaction [protein]-peptidylproline (omega=180) = [protein]-peptidylproline (omega=0). Its function is as follows. PPIases accelerate the folding of proteins. It catalyzes the cis-trans isomerization of proline imidic peptide bonds in oligopeptides. The polypeptide is Probable FKBP-type peptidyl-prolyl cis-trans isomerase (Haemophilus influenzae (strain ATCC 51907 / DSM 11121 / KW20 / Rd)).